Here is a 179-residue protein sequence, read N- to C-terminus: Crossover junction endodeoxyribonuclease RuvC (179 aa).

Active-site residues include Asp-12, Glu-72, and Asp-144. Mg(2+) contacts are provided by Asp-12, Glu-72, and Asp-144.

The protein belongs to the RuvC family. As to quaternary structure, homodimer which binds Holliday junction (HJ) DNA. The HJ becomes 2-fold symmetrical on binding to RuvC with unstacked arms; it has a different conformation from HJ DNA in complex with RuvA. In the full resolvosome a probable DNA-RuvA(4)-RuvB(12)-RuvC(2) complex forms which resolves the HJ. Requires Mg(2+) as cofactor.

The protein localises to the cytoplasm. It carries out the reaction Endonucleolytic cleavage at a junction such as a reciprocal single-stranded crossover between two homologous DNA duplexes (Holliday junction).. In terms of biological role, the RuvA-RuvB-RuvC complex processes Holliday junction (HJ) DNA during genetic recombination and DNA repair. Endonuclease that resolves HJ intermediates. Cleaves cruciform DNA by making single-stranded nicks across the HJ at symmetrical positions within the homologous arms, yielding a 5'-phosphate and a 3'-hydroxyl group; requires a central core of homology in the junction. The consensus cleavage sequence is 5'-(A/T)TT(C/G)-3'. Cleavage occurs on the 3'-side of the TT dinucleotide at the point of strand exchange. HJ branch migration catalyzed by RuvA-RuvB allows RuvC to scan DNA until it finds its consensus sequence, where it cleaves and resolves the cruciform DNA. The polypeptide is Crossover junction endodeoxyribonuclease RuvC (Dechloromonas aromatica (strain RCB)).